The primary structure comprises 361 residues: 5-formaminoimidazole-4-carboxamide-1-(beta)-D-ribofuranosyl 5'-monophosphate synthetase (361 aa).

5-amino-1-(5-phospho-beta-D-ribosyl)imidazole-4-carboxamide-binding residues include H27 and S94. The 233-residue stretch at 116–348 (RAILRWEAER…MGQRIAKEIK (233 aa)) folds into the ATP-grasp domain. ATP contacts are provided by residues 146–208 (PDDI…ANYC) and E230. N258 lines the 5-amino-1-(5-phospho-beta-D-ribosyl)imidazole-4-carboxamide pocket. Mg(2+) is bound by residues Q297 and E310.

This sequence belongs to the phosphohexose mutase family. Mg(2+) serves as cofactor. It depends on Mn(2+) as a cofactor.

It carries out the reaction 5-amino-1-(5-phospho-beta-D-ribosyl)imidazole-4-carboxamide + formate + ATP = 5-formamido-1-(5-phospho-D-ribosyl)imidazole-4-carboxamide + ADP + phosphate. It participates in purine metabolism; IMP biosynthesis via de novo pathway; 5-formamido-1-(5-phospho-D-ribosyl)imidazole-4-carboxamide from 5-amino-1-(5-phospho-D-ribosyl)imidazole-4-carboxamide (formate route): step 1/1. In terms of biological role, catalyzes the ATP- and formate-dependent formylation of 5-aminoimidazole-4-carboxamide-1-beta-d-ribofuranosyl 5'-monophosphate (AICAR) to 5-formaminoimidazole-4-carboxamide-1-beta-d-ribofuranosyl 5'-monophosphate (FAICAR) in the absence of folates. This is 5-formaminoimidazole-4-carboxamide-1-(beta)-D-ribofuranosyl 5'-monophosphate synthetase from Methanococcus maripaludis (strain C5 / ATCC BAA-1333).